Here is a 304-residue protein sequence, read N- to C-terminus: Elongation factor Ts (304 aa).

Residues 79 to 82 (TDFV) are involved in Mg(2+) ion dislocation from EF-Tu.

This sequence belongs to the EF-Ts family.

The protein localises to the cytoplasm. Functionally, associates with the EF-Tu.GDP complex and induces the exchange of GDP to GTP. It remains bound to the aminoacyl-tRNA.EF-Tu.GTP complex up to the GTP hydrolysis stage on the ribosome. This Polaromonas sp. (strain JS666 / ATCC BAA-500) protein is Elongation factor Ts.